The primary structure comprises 602 residues: Isocitrate dehydrogenase kinase/phosphatase (602 aa).

Residues 325 to 331 (APGIKGM) and Lys-346 each bind ATP. Asp-381 is an active-site residue.

Belongs to the AceK family.

The protein resides in the cytoplasm. It carries out the reaction L-seryl-[isocitrate dehydrogenase] + ATP = O-phospho-L-seryl-[isocitrate dehydrogenase] + ADP + H(+). Bifunctional enzyme which can phosphorylate or dephosphorylate isocitrate dehydrogenase (IDH) on a specific serine residue. This is a regulatory mechanism which enables bacteria to bypass the Krebs cycle via the glyoxylate shunt in response to the source of carbon. When bacteria are grown on glucose, IDH is fully active and unphosphorylated, but when grown on acetate or ethanol, the activity of IDH declines drastically concomitant with its phosphorylation. In Paracidovorax citrulli (strain AAC00-1) (Acidovorax citrulli), this protein is Isocitrate dehydrogenase kinase/phosphatase.